The sequence spans 498 residues: Probable cytosol aminopeptidase (498 aa).

Residues lysine 264 and aspartate 269 each contribute to the Mn(2+) site. Residue lysine 276 is part of the active site. The Mn(2+) site is built by aspartate 287, aspartate 346, and glutamate 348. The active site involves arginine 350.

Belongs to the peptidase M17 family. The cofactor is Mn(2+).

Its subcellular location is the cytoplasm. It catalyses the reaction Release of an N-terminal amino acid, Xaa-|-Yaa-, in which Xaa is preferably Leu, but may be other amino acids including Pro although not Arg or Lys, and Yaa may be Pro. Amino acid amides and methyl esters are also readily hydrolyzed, but rates on arylamides are exceedingly low.. The catalysed reaction is Release of an N-terminal amino acid, preferentially leucine, but not glutamic or aspartic acids.. In terms of biological role, presumably involved in the processing and regular turnover of intracellular proteins. Catalyzes the removal of unsubstituted N-terminal amino acids from various peptides. The chain is Probable cytosol aminopeptidase from Rhizobium rhizogenes (strain K84 / ATCC BAA-868) (Agrobacterium radiobacter).